Consider the following 837-residue polypeptide: Tuftelin-interacting protein 11 (837 aa).

The span at 1-13 shows a compositional bias: basic and acidic residues; sequence MSLSHLYRDGEGH. 3 disordered regions span residues 1–31, 54–73, and 85–133; these read MSLS…DWDL, WAER…RARD, and LKKG…KGFA. Residues 1-50 form a required for interaction with DHX15 region; that stretch reads MSLSHLYRDGEGHMDDDDDERENFEITDWDLQNEFNPNRQRHWQTKEEAT. At Ser2 the chain carries Phosphoserine. A compositionally biased stretch (acidic residues) spans 14 to 28; that stretch reads MDDDDDERENFEITD. A compositionally biased stretch (basic and acidic residues) spans 54–64; the sequence is WAERDSDEERP. Phosphoserine occurs at positions 59 and 98. Positions 91 to 102 are enriched in acidic residues; it reads EEAELEDSEDEE. Residues 103-116 show a composition bias toward basic and acidic residues; sequence KPVKQDDFPKDFGP. At Ser144 the chain carries Phosphoserine. Positions 149–195 constitute a G-patch domain; sequence TKGIGQKLLQKMGYVPGRGLGKNAQGIINPIEAKQRKGKGAVGAYGS. Disordered stretches follow at residues 183–236 and 289–312; these read QRKG…KKKP and HNVP…EAKA. The residue at position 210 (Ser210) is a Phosphoserine. Over residues 217–231 the composition is skewed to basic and acidic residues; that stretch reads EFQKELSQWRKDPSG. A Nuclear localization signal motif is present at residues 700 to 705; sequence VKDKFN. A required for nuclear speckle localization region spans residues 710–734; sequence IMNRAVSSNVGAYMQPGARENIAYL.

It belongs to the TFP11/STIP family. As to quaternary structure, identified in the spliceosome C complex. Found in the Intron Large (IL) complex, a post-mRNA release spliceosomal complex containing the excised intron, U2, U5 and U6 snRNPs, and splicing factors. Interacts with TUFT1. Interacts with DHX15; indicative for a recruitment of DHX15 to the IL complex. Interacts with GCFC2.

It localises to the cytoplasm. The protein localises to the nucleus. Its function is as follows. Involved in pre-mRNA splicing, specifically in spliceosome disassembly during late-stage splicing events. Intron turnover seems to proceed through reactions in two lariat-intron associated complexes termed Intron Large (IL) and Intron Small (IS). In cooperation with DHX15 seems to mediate the transition of the U2, U5 and U6 snRNP-containing IL complex to the snRNP-free IS complex leading to efficient debranching and turnover of excised introns. May play a role in the differentiation of ameloblasts and odontoblasts or in the forming of the enamel extracellular matrix. In Canis lupus familiaris (Dog), this protein is Tuftelin-interacting protein 11 (TFIP11).